A 265-amino-acid chain; its full sequence is Phosphonoacetaldehyde hydrolase (265 aa).

The active-site Nucleophile is aspartate 9. Mg(2+) is bound by residues aspartate 9 and alanine 11. Residue lysine 50 is the Schiff-base intermediate with substrate of the active site. Aspartate 184 provides a ligand contact to Mg(2+).

The protein belongs to the HAD-like hydrolase superfamily. PhnX family. As to quaternary structure, homodimer. Requires Mg(2+) as cofactor.

The catalysed reaction is phosphonoacetaldehyde + H2O = acetaldehyde + phosphate + H(+). In terms of biological role, involved in phosphonate degradation. This chain is Phosphonoacetaldehyde hydrolase, found in Lactiplantibacillus plantarum (strain ATCC BAA-793 / NCIMB 8826 / WCFS1) (Lactobacillus plantarum).